The sequence spans 200 residues: Imidazoleglycerol-phosphate dehydratase (200 aa).

Belongs to the imidazoleglycerol-phosphate dehydratase family.

It localises to the cytoplasm. It catalyses the reaction D-erythro-1-(imidazol-4-yl)glycerol 3-phosphate = 3-(imidazol-4-yl)-2-oxopropyl phosphate + H2O. Its pathway is amino-acid biosynthesis; L-histidine biosynthesis; L-histidine from 5-phospho-alpha-D-ribose 1-diphosphate: step 6/9. The chain is Imidazoleglycerol-phosphate dehydratase from Chlorobium phaeobacteroides (strain DSM 266 / SMG 266 / 2430).